A 101-amino-acid chain; its full sequence is NAD(P)H-quinone oxidoreductase subunit 4L, chloroplastic (101 aa).

The next 3 helical transmembrane spans lie at 2-22, 32-52, and 61-81; these read IFEHALVLSAFLFSIGIYGLI, MCLELILNAVNINLVTFSDFF, and IFSIFVIAVAAAEAAIGPAIV.

The protein belongs to the complex I subunit 4L family. NDH is composed of at least 16 different subunits, 5 of which are encoded in the nucleus.

The protein resides in the plastid. It localises to the chloroplast thylakoid membrane. The catalysed reaction is a plastoquinone + NADH + (n+1) H(+)(in) = a plastoquinol + NAD(+) + n H(+)(out). It carries out the reaction a plastoquinone + NADPH + (n+1) H(+)(in) = a plastoquinol + NADP(+) + n H(+)(out). In terms of biological role, NDH shuttles electrons from NAD(P)H:plastoquinone, via FMN and iron-sulfur (Fe-S) centers, to quinones in the photosynthetic chain and possibly in a chloroplast respiratory chain. The immediate electron acceptor for the enzyme in this species is believed to be plastoquinone. Couples the redox reaction to proton translocation, and thus conserves the redox energy in a proton gradient. This Phaseolus vulgaris (Kidney bean) protein is NAD(P)H-quinone oxidoreductase subunit 4L, chloroplastic.